Consider the following 385-residue polypeptide: MAKRDYYEVLGVAKNASDEDLKKAYRKLAMKYHPDRNPDSKEAEEKFKEAKEAYEVLGDEQKRAAYDRYGHAGVDPNAAGMGGGMGGGMGGGMGGGMGGGFADAFGDIFGEIFGAGRRGGGGPQVYRGADLKYALEITLEQAASGFDTEIRVPSWENCDTCHGSGAKAGTSPKTCRTCGGSGAVRMQQGFFSVQQTCPTCHGTGKEITDPCPSCDGVGRTRRNKTLQVKIPAGIDDGMRIRSSGNGEPGINGGPPGDLYVEIHIKQHKIFQRDGDDLHCELTIPFTTAALGGELQVPTLGGKAEISIPEGTQSGKTFRLRAKGIRGVRGSYPGDLYCHVVVETPVRLSDEQKAILRQFEASLNDGGDRHSPQSKSWTDRVKEFFS.

The 66-residue stretch at 5–70 folds into the J domain; it reads DYYEVLGVAK…QKRAAYDRYG (66 aa). The segment at 145–223 adopts a CR-type zinc-finger fold; that stretch reads GFDTEIRVPS…CDGVGRTRRN (79 aa). Zn(2+) is bound by residues Cys158, Cys161, Cys175, Cys178, Cys197, Cys200, Cys211, and Cys214. CXXCXGXG motif repeat units follow at residues 158-165, 175-182, 197-204, and 211-218; these read CDTCHGSG, CRTCGGSG, CPTCHGTG, and CPSCDGVG.

It belongs to the DnaJ family. Homodimer. The cofactor is Zn(2+).

It is found in the cytoplasm. Its function is as follows. Participates actively in the response to hyperosmotic and heat shock by preventing the aggregation of stress-denatured proteins and by disaggregating proteins, also in an autonomous, DnaK-independent fashion. Unfolded proteins bind initially to DnaJ; upon interaction with the DnaJ-bound protein, DnaK hydrolyzes its bound ATP, resulting in the formation of a stable complex. GrpE releases ADP from DnaK; ATP binding to DnaK triggers the release of the substrate protein, thus completing the reaction cycle. Several rounds of ATP-dependent interactions between DnaJ, DnaK and GrpE are required for fully efficient folding. Also involved, together with DnaK and GrpE, in the DNA replication of plasmids through activation of initiation proteins. In Bordetella pertussis (strain Tohama I / ATCC BAA-589 / NCTC 13251), this protein is Chaperone protein DnaJ.